The following is a 704-amino-acid chain: Phosphatidylinositol-3,5-bisphosphate 3-phosphatase MTMR8 (704 aa).

The Myotubularin phosphatase domain occupies glycine 126–tyrosine 500. Residues asparagine 250, asparagine 275, and isoleucine 276 each contribute to the a 1,2-diacyl-sn-glycero-3-phospho-(1D-myo-inositol-3,5-bisphosphate) site. Asparagine 250, asparagine 275, and isoleucine 276 together coordinate a 1,2-diacyl-sn-glycero-3-phospho-(1D-myo-inositol-3-phosphate). Catalysis depends on cysteine 338, which acts as the Phosphocysteine intermediate. Serine 339, aspartate 340, glycine 341, tryptophan 342, aspartate 343, arginine 344, lysine 380, and arginine 384 together coordinate a 1,2-diacyl-sn-glycero-3-phospho-(1D-myo-inositol-3,5-bisphosphate). A 1,2-diacyl-sn-glycero-3-phospho-(1D-myo-inositol-3-phosphate) is bound by residues serine 339, aspartate 340, glycine 341, tryptophan 342, aspartate 343, and arginine 344. Residues serine 339 and aspartate 340 each coordinate phosphate. Phosphate contacts are provided by tryptophan 342, aspartate 343, and arginine 344. Residue arginine 384 participates in a 1,2-diacyl-sn-glycero-3-phospho-(1D-myo-inositol-3-phosphate) binding. Positions glutamate 515–arginine 541 form a coiled coil.

This sequence belongs to the protein-tyrosine phosphatase family. Non-receptor class myotubularin subfamily. In terms of assembly, homodimer. Heterodimer with MTMR9.

It localises to the nucleus envelope. It catalyses the reaction a 1,2-diacyl-sn-glycero-3-phospho-(1D-myo-inositol-3,5-bisphosphate) + H2O = a 1,2-diacyl-sn-glycero-3-phospho-(1D-myo-inositol-5-phosphate) + phosphate. The enzyme catalyses a 1,2-diacyl-sn-glycero-3-phospho-(1D-myo-inositol-3-phosphate) + H2O = a 1,2-diacyl-sn-glycero-3-phospho-(1D-myo-inositol) + phosphate. The catalysed reaction is 1,2-dioctanoyl-sn-glycero-3-phospho-(1D-myo-inositol-3,5-bisphosphate) + H2O = 1,2-dioctanoyl-sn-glycero-3-phospho-(1D-myo-inositol-5-phosphate) + phosphate. With respect to regulation, interaction with MTMR9 increases phosphatase activity. Functionally, lipid phosphatase that specifically dephosphorylates the D-3 position of phosphatidylinositol 3-phosphate and phosphatidylinositol 3,5-bisphosphate, generating phosphatidylinositol and phosphatidylinositol 5-phosphate. In complex with MTMR9, negatively regulates autophagy. This is Phosphatidylinositol-3,5-bisphosphate 3-phosphatase MTMR8 from Homo sapiens (Human).